An 836-amino-acid chain; its full sequence is Lon protease (836 aa).

The Lon N-terminal domain occupies 41–233 (LPVLPLRNTV…RLIHFLNREV (193 aa)). ATP is bound at residue 385-392 (GPPGVGKT). Residues 627-811 (VMLSGVAVGL…DDLIDYVLEP (185 aa)) enclose the Lon proteolytic domain. Catalysis depends on residues Ser-714 and Lys-757. The tract at residues 816–836 (APQFKVEDKDHTPETTGNESE) is disordered.

This sequence belongs to the peptidase S16 family. As to quaternary structure, homohexamer. Organized in a ring with a central cavity.

It localises to the cytoplasm. The catalysed reaction is Hydrolysis of proteins in presence of ATP.. Its function is as follows. ATP-dependent serine protease that mediates the selective degradation of mutant and abnormal proteins as well as certain short-lived regulatory proteins. Required for cellular homeostasis and for survival from DNA damage and developmental changes induced by stress. Degrades polypeptides processively to yield small peptide fragments that are 5 to 10 amino acids long. Binds to DNA in a double-stranded, site-specific manner. In Chloroherpeton thalassium (strain ATCC 35110 / GB-78), this protein is Lon protease.